Here is a 110-residue protein sequence, read N- to C-terminus: UPF0122 protein gbs1018 (110 aa).

This sequence belongs to the UPF0122 family.

In terms of biological role, might take part in the signal recognition particle (SRP) pathway. This is inferred from the conservation of its genetic proximity to ftsY/ffh. May be a regulatory protein. The chain is UPF0122 protein gbs1018 from Streptococcus agalactiae serotype III (strain NEM316).